An 817-amino-acid chain; its full sequence is Fibroblast growth factor receptor 2 (817 aa).

Positions 1-22 (MFARGWLLGALLLMTLATVSVA) are cleaved as a signal peptide. Over 23–377 (RPSLKIDLVN…ETDYPPDYVE (355 aa)) the chain is Extracellular. Ig-like C2-type domains are found at residues 26-126 (LKID…VNVT), 159-247 (PEKM…YTLD), and 256-358 (PILQ…AWLT). Asparagine 32, asparagine 84, and asparagine 124 each carry an N-linked (GlcNAc...) asparagine glycan. Cysteine 63 and cysteine 108 are oxidised to a cystine. Residues 161-178 (KMEKKLHAVPAANTVKFR) are heparin-binding. Cysteine 179 and cysteine 231 are oxidised to a cystine. Asparagine 228, asparagine 265, asparagine 297, asparagine 318, and asparagine 331 each carry an N-linked (GlcNAc...) asparagine glycan. A disulfide bridge connects residues cysteine 278 and cysteine 342. The helical transmembrane segment at 378–398 (IAIYCIGVFLIACMVVIVVVC) threads the bilayer. The Cytoplasmic portion of the chain corresponds to 399–817 (RMRTSAKKPD…YQHINGGIKT (419 aa)). The disordered stretch occupies residues 429 to 465 (TVSSDSSSSMSSSTPLVRITTRRSSAHDDPIPEYDLP). Low complexity predominate over residues 431–441 (SSDSSSSMSSS). Phosphotyrosine; by autocatalysis is present on tyrosine 462. Residues 477–766 (LTLGKPLGEG…LTLATNEEYL (290 aa)) form the Protein kinase domain. ATP-binding positions include 483 to 491 (LGEGCFGQV), lysine 513, 561 to 563 (EYA), and asparagine 567. Tyrosine 582 is subject to Phosphotyrosine; by autocatalysis. Residue aspartate 622 is the Proton acceptor of the active site. Tyrosine 652, tyrosine 653, and tyrosine 765 each carry phosphotyrosine; by autocatalysis.

This sequence belongs to the protein kinase superfamily. Tyr protein kinase family. Fibroblast growth factor receptor subfamily. As to quaternary structure, monomer. Homodimer after ligand binding. Post-translationally, autophosphorylated. Binding of FGF family members together with heparan sulfate proteoglycan or heparin promotes receptor dimerization and autophosphorylation on tyrosine residues. Autophosphorylation occurs in trans between the two FGFR molecules present in the dimer. N-glycosylated in the endoplasmic reticulum. The N-glycan chains undergo further maturation to an Endo H-resistant form in the Golgi apparatus. In terms of processing, ubiquitinated. FGFR2 is rapidly ubiquitinated after autophosphorylation, leading to internalization and degradation. Subject to degradation both in lysosomes and by the proteasome.

The protein localises to the cell membrane. It localises to the golgi apparatus. Its subcellular location is the cytoplasmic vesicle. The enzyme catalyses L-tyrosyl-[protein] + ATP = O-phospho-L-tyrosyl-[protein] + ADP + H(+). Present in an inactive conformation in the absence of bound ligand. Ligand binding leads to dimerization and activation by autophosphorylation on tyrosine residues. Its function is as follows. Tyrosine-protein kinase that acts as a cell-surface receptor for fibroblast growth factors and plays an essential role in the regulation of cell proliferation, differentiation, migration and apoptosis, and in the regulation of embryonic development. Required for normal embryonic patterning, limb bud development, lung morphogenesis, osteogenesis and skin development. Plays an essential role in the regulation of osteoblast differentiation, proliferation and apoptosis, and is required for normal skeleton development. Promotes cell proliferation in keratinocytes and immature osteoblasts, but promotes apoptosis in differentiated osteoblasts. Phosphorylates PLCG1, FRS2 and PAK4. Ligand binding leads to the activation of several signaling cascades. Activation of PLCG1 leads to the production of the cellular signaling molecules diacylglycerol and inositol 1,4,5-trisphosphate. Phosphorylation of FRS2 triggers recruitment of GRB2, GAB1, PIK3R1 and SOS1, and mediates activation of RAS, MAPK1/ERK2, MAPK3/ERK1 and the MAP kinase signaling pathway, as well as of the AKT1 signaling pathway. FGFR2 signaling is down-regulated by ubiquitination, internalization and degradation. Mutations that lead to constitutive kinase activation or impair normal FGFR2 maturation, internalization and degradation lead to aberrant signaling. Over-expressed FGFR2 promotes activation of STAT1. The sequence is that of Fibroblast growth factor receptor 2 (fgfr2) from Danio rerio (Zebrafish).